Consider the following 1131-residue polypeptide: Phytochrome (1131 aa).

The segment at 1 to 30 (MASNSRHTQSQSTGSNNRRSSTNTNTTTNK) is disordered. Over residues 9 to 29 (QSQSTGSNNRRSSTNTNTTTN) the composition is skewed to low complexity. In terms of domain architecture, GAF spans 227 to 406 (DVGLLCDTVV…ALGLQLNMEL (180 aa)). Cys-332 is a binding site for phytochromobilin. PAS domains are found at residues 621–692 (VASE…LRGE) and 755–826 (DYRS…TIVL). Positions 903–1123 (YIRQEIKNPL…LVNVEFPMAQ (221 aa)) constitute a Histidine kinase domain.

The protein belongs to the phytochrome family. In terms of assembly, homodimer. In terms of processing, contains one covalently linked phytochromobilin chromophore.

Regulatory photoreceptor which exists in two forms that are reversibly interconvertible by light: the Pr form that absorbs maximally in the red region of the spectrum and the Pfr form that absorbs maximally in the far-red region. Photoconversion of Pr to Pfr induces an array of morphogenic responses, whereas reconversion of Pfr to Pr cancels the induction of those responses. Pfr controls the expression of a number of nuclear genes including those encoding the small subunit of ribulose-bisphosphate carboxylase, chlorophyll A/B binding protein, protochlorophyllide reductase, rRNA, etc. It also controls the expression of its own gene(s) in a negative feedback fashion. The sequence is that of Phytochrome from Pinus sylvestris (Scotch pine).